Reading from the N-terminus, the 429-residue chain is tRNA-2-methylthio-N(6)-dimethylallyladenosine synthase (429 aa).

In terms of domain architecture, MTTase N-terminal spans 1–110; sequence MKFFIKTYGC…IPEAVELSIK (110 aa). [4Fe-4S] cluster contacts are provided by Cys10, Cys46, Cys75, Cys146, Cys150, and Cys153. One can recognise a Radical SAM core domain in the interval 132–364; that stretch reads RNSKHHAWIT…NLQKEINKML (233 aa). Residues 366 to 427 form the TRAM domain; that stretch reads ESYLDKTVEV…AGPLYGDIIK (62 aa).

This sequence belongs to the methylthiotransferase family. MiaB subfamily. Monomer. [4Fe-4S] cluster serves as cofactor.

The protein resides in the cytoplasm. The catalysed reaction is N(6)-dimethylallyladenosine(37) in tRNA + (sulfur carrier)-SH + AH2 + 2 S-adenosyl-L-methionine = 2-methylsulfanyl-N(6)-dimethylallyladenosine(37) in tRNA + (sulfur carrier)-H + 5'-deoxyadenosine + L-methionine + A + S-adenosyl-L-homocysteine + 2 H(+). In terms of biological role, catalyzes the methylthiolation of N6-(dimethylallyl)adenosine (i(6)A), leading to the formation of 2-methylthio-N6-(dimethylallyl)adenosine (ms(2)i(6)A) at position 37 in tRNAs that read codons beginning with uridine. In Thermosipho africanus (strain TCF52B), this protein is tRNA-2-methylthio-N(6)-dimethylallyladenosine synthase.